A 114-amino-acid polypeptide reads, in one-letter code: Large ribosomal subunit protein uL22 (114 aa).

The protein belongs to the universal ribosomal protein uL22 family. In terms of assembly, part of the 50S ribosomal subunit.

Functionally, this protein binds specifically to 23S rRNA; its binding is stimulated by other ribosomal proteins, e.g. L4, L17, and L20. It is important during the early stages of 50S assembly. It makes multiple contacts with different domains of the 23S rRNA in the assembled 50S subunit and ribosome. In terms of biological role, the globular domain of the protein is located near the polypeptide exit tunnel on the outside of the subunit, while an extended beta-hairpin is found that lines the wall of the exit tunnel in the center of the 70S ribosome. The sequence is that of Large ribosomal subunit protein uL22 from Streptococcus uberis (strain ATCC BAA-854 / 0140J).